Consider the following 421-residue polypeptide: Inner membrane protein YihN (421 aa).

Residues 1–44 (MLTKKKWALFSLLTLCGGTIYKLPSLKDAFYIPMQEYFHLTNGQ) lie on the Periplasmic side of the membrane. The chain crosses the membrane as a helical span at residues 45–65 (IGNAMSVNSFVTTVGFFLSIY). Over 66–73 (FADKLPRR) the chain is Cytoplasmic. Residues 74–91 (YTMSFSLIATGLLGVYLT) traverse the membrane as a helical segment. Residues 92–95 (TMPG) are Periplasmic-facing. Residues 96-118 (YWGILFVWALFGVTCDMMNWPVL) form a helical membrane-spanning segment. Residues 119–146 (LKSVSRLGNSEQQGRLFGFFETGRGIVD) are Cytoplasmic-facing. Residues 147 to 167 (TVVAFSALAVFTWFGSGLLGF) form a helical membrane-spanning segment. Lys-168 is a topological domain (periplasmic). The helical transmembrane segment at 169-189 (AGIWFYSLIVIAVGIIIFFVL) threads the bilayer. Residues 190 to 220 (NDKEEAPSVEVKKEDGASKNTSMTSVLKDKT) lie on the Cytoplasmic side of the membrane. A run of 2 helical transmembrane segments spans residues 221-241 (IWLIAFNVFFVYAVYCGLTFF) and 242-262 (IPFLKNIYLLPVALVGAYGII). Residues 263-288 (NQYCLKMIGGPIGGMISDKILKSPSK) lie on the Cytoplasmic side of the membrane. The next 2 helical transmembrane spans lie at 289–309 (YLCYTFIISTAALVLLIMLPH) and 310–330 (ESMPVYLGMACTLGFGAIVFT). Residues 331–354 (QRAVFFAPIGEAKIAENKTGAAMA) are Cytoplasmic-facing. Residues 355 to 375 (LGSFIGYAPAMFCFSLYGYIL) traverse the membrane as a helical segment. Residues 376–385 (DLNPGIIGYK) lie on the Periplasmic side of the membrane. Residues 386-406 (IVFGIMACFAFSGAVVSVMLV) form a helical membrane-spanning segment. Over 407-421 (KRISQRKKEMLAAEA) the chain is Cytoplasmic.

Belongs to the major facilitator superfamily.

The protein resides in the cell inner membrane. The sequence is that of Inner membrane protein YihN (yihN) from Escherichia coli (strain K12).